Consider the following 219-residue polypeptide: ATP-dependent Clp protease proteolytic subunit 1, mitochondrial (219 aa).

The N-terminal 23 residues, 1 to 23 (MLRRILTTSSVRNLTSSTQARVG), are a transit peptide targeting the mitochondrion. The active-site Nucleophile is the S118. H143 is an active-site residue.

The protein belongs to the peptidase S14 family. In terms of assembly, tetradecamer that assembles into a two heptameric rings with a central cavity.

It is found in the mitochondrion matrix. It catalyses the reaction Hydrolysis of proteins to small peptides in the presence of ATP and magnesium. alpha-casein is the usual test substrate. In the absence of ATP, only oligopeptides shorter than five residues are hydrolyzed (such as succinyl-Leu-Tyr-|-NHMec, and Leu-Tyr-Leu-|-Tyr-Trp, in which cleavage of the -Tyr-|-Leu- and -Tyr-|-Trp bonds also occurs).. Its function is as follows. Clp cleaves peptides in various proteins in a process that requires ATP hydrolysis. Clp may be responsible for a fairly general and central housekeeping function rather than for the degradation of specific substrates. This Caenorhabditis briggsae protein is ATP-dependent Clp protease proteolytic subunit 1, mitochondrial.